The chain runs to 429 residues: Ribosomal RNA small subunit methyltransferase B (429 aa).

S-adenosyl-L-methionine is bound by residues 254–260 (CAAPGGK), Asp277, Asp303, and Asp322. The Nucleophile role is filled by Cys375.

The protein belongs to the class I-like SAM-binding methyltransferase superfamily. RsmB/NOP family.

Its subcellular location is the cytoplasm. It catalyses the reaction cytidine(967) in 16S rRNA + S-adenosyl-L-methionine = 5-methylcytidine(967) in 16S rRNA + S-adenosyl-L-homocysteine + H(+). In terms of biological role, specifically methylates the cytosine at position 967 (m5C967) of 16S rRNA. This is Ribosomal RNA small subunit methyltransferase B from Yersinia enterocolitica serotype O:8 / biotype 1B (strain NCTC 13174 / 8081).